The sequence spans 140 residues: ATP synthase epsilon chain (140 aa).

This sequence belongs to the ATPase epsilon chain family. As to quaternary structure, F-type ATPases have 2 components, CF(1) - the catalytic core - and CF(0) - the membrane proton channel. CF(1) has five subunits: alpha(3), beta(3), gamma(1), delta(1), epsilon(1). CF(0) has three main subunits: a, b and c.

Its subcellular location is the cell inner membrane. Functionally, produces ATP from ADP in the presence of a proton gradient across the membrane. This Vibrio alginolyticus protein is ATP synthase epsilon chain (atpC).